We begin with the raw amino-acid sequence, 449 residues long: C4-dicarboxylate transport protein (449 aa).

Helical transmembrane passes span 20–42, 62–84, 91–113, 164–181, 202–224, 239–261, 344–366, and 370–389; these read YLQL…HCYP, IISP…VGTV, AMVY…AHVV, ILQV…LALA, LVQM…TIGK, SFYL…FSGF, LALF…AGFI, and ATLT…ILGV.

Belongs to the dicarboxylate/amino acid:cation symporter (DAACS) (TC 2.A.23) family.

It localises to the cell inner membrane. Functionally, responsible for the transport of dicarboxylates such as succinate, fumarate, and malate from the periplasm across the inner membrane. This is C4-dicarboxylate transport protein (dctA) from Xylella fastidiosa (strain 9a5c).